A 508-amino-acid chain; its full sequence is Photosystem II CP47 reaction center protein (508 aa).

6 consecutive transmembrane segments (helical) span residues 21–36 (SVHIMHTALVAGWAGS), 101–115 (IVFSGLCFLAAIWHW), 140–156 (GIHLFLSGVACFGFGAF), 203–218 (IAAGTLGILAGLFHLS), 237–252 (VLSSSIAAVFFAAFVV), and 457–472 (SFALLFFFGHIWHGAR).

The protein belongs to the PsbB/PsbC family. PsbB subfamily. As to quaternary structure, PSII is composed of 1 copy each of membrane proteins PsbA, PsbB, PsbC, PsbD, PsbE, PsbF, PsbH, PsbI, PsbJ, PsbK, PsbL, PsbM, PsbT, PsbX, PsbY, PsbZ, Psb30/Ycf12, at least 3 peripheral proteins of the oxygen-evolving complex and a large number of cofactors. It forms dimeric complexes. Binds multiple chlorophylls. PSII binds additional chlorophylls, carotenoids and specific lipids. is required as a cofactor.

It localises to the plastid. It is found in the chloroplast thylakoid membrane. Functionally, one of the components of the core complex of photosystem II (PSII). It binds chlorophyll and helps catalyze the primary light-induced photochemical processes of PSII. PSII is a light-driven water:plastoquinone oxidoreductase, using light energy to abstract electrons from H(2)O, generating O(2) and a proton gradient subsequently used for ATP formation. The polypeptide is Photosystem II CP47 reaction center protein (Eucalyptus globulus subsp. globulus (Tasmanian blue gum)).